The sequence spans 479 residues: Mannose-1-phosphate guanylyltransferase RfbM (479 aa).

It belongs to the mannose-6-phosphate isomerase type 2 family. In terms of assembly, homodimer.

The enzyme catalyses alpha-D-mannose 1-phosphate + GTP + H(+) = GDP-alpha-D-mannose + diphosphate. It participates in nucleotide-sugar biosynthesis; GDP-alpha-D-mannose biosynthesis; GDP-alpha-D-mannose from alpha-D-mannose 1-phosphate (GTP route): step 1/1. The protein operates within bacterial outer membrane biogenesis; LPS O-antigen biosynthesis. Its function is as follows. Involved in GDP-mannose biosynthesis which serves as the activated sugar nucleotide precursor for mannose residues in cell surface polysaccharides. This enzyme participates in synthesis of the LPS group B O antigen. The sequence is that of Mannose-1-phosphate guanylyltransferase RfbM (rfbM) from Salmonella typhimurium (strain LT2 / SGSC1412 / ATCC 700720).